A 316-amino-acid polypeptide reads, in one-letter code: N-acetyl-gamma-glutamyl-phosphate reductase (316 aa).

Residue Cys-136 is part of the active site.

This sequence belongs to the NAGSA dehydrogenase family. Type 1 subfamily.

Its subcellular location is the cytoplasm. The enzyme catalyses N-acetyl-L-glutamate 5-semialdehyde + phosphate + NADP(+) = N-acetyl-L-glutamyl 5-phosphate + NADPH + H(+). The protein operates within amino-acid biosynthesis; L-arginine biosynthesis; N(2)-acetyl-L-ornithine from L-glutamate: step 3/4. In terms of biological role, catalyzes the NADPH-dependent reduction of N-acetyl-5-glutamyl phosphate to yield N-acetyl-L-glutamate 5-semialdehyde. The polypeptide is N-acetyl-gamma-glutamyl-phosphate reductase (Xanthomonas campestris pv. campestris (strain 8004)).